The following is a 519-amino-acid chain: MENRSDFEADDYGDISWSNWSNWSTPAGVLFSAMSSVLSASNHTPLPDFGQELALSTSSFNHSQTLSTDLPAVGDVEDAAEDAAASMETGSFAFVVPWWRQVLWSILFGGMVIVATGGNLIVVWIVMTTKRMRTVTNYFIVNLSIADAMVSSLNVTFNYYYMLDSDWPFGEFYCKLSQFIAMLSICASVFTLMAISIDRYVAIIRPLQPRMSKRCNLAIAAVIWLASTLISCPMMIIYRTEEVPVRGLSNRTVCYPEWPDGPTNHSTMESLYNILIIILTYFLPIVSMTVTYSRVGIELWGSKTIGECTPRQVENVRSKRRVVKMMIVVVLIFAICWLPFHSYFIITSCYPAITEAPFIQELYLAIYWLAMSNSMYNPIIYCWMNSRFRYGFKMVFRWCLFVRVGTEPFSRRENLTSRYSCSGSPDHNRIKRNDTQKSILYTCPSSPKSHRISHSGTGRSATLRNSLPAESLSSGGSGGGGHRKRLSYQQEMQQRWSGPNSATAVTNSSSTANTTQLLS.

The Extracellular segment spans residues Met-1–Arg-100. Residues Asn-3, Asn-19, Asn-22, and Asn-61 are each glycosylated (N-linked (GlcNAc...) asparagine). A helical membrane pass occupies residues Gln-101–Val-123. Residues Trp-124 to Thr-134 are Cytoplasmic-facing. A helical membrane pass occupies residues Val-135–Val-155. Topologically, residues Thr-156 to Lys-175 are extracellular. A disulfide bridge links Cys-174 with Cys-254. The chain crosses the membrane as a helical span at residues Leu-176–Ile-197. The Cytoplasmic segment spans residues Asp-198–Leu-217. Residues Ala-218–Tyr-238 form a helical membrane-spanning segment. Topologically, residues Arg-239 to Ser-270 are extracellular. Residues Leu-271 to Tyr-292 form a helical membrane-spanning segment. Topologically, residues Ser-293–Lys-324 are cytoplasmic. A helical membrane pass occupies residues Met-325–Ile-346. Residues Thr-347–Glu-361 lie on the Extracellular side of the membrane. Residues Leu-362–Met-384 form a helical membrane-spanning segment. Residues Asn-385–Ser-519 lie on the Cytoplasmic side of the membrane. Cys-399 carries the S-palmitoyl cysteine lipid modification. Positions Pro-444–Ser-519 are disordered. 2 stretches are compositionally biased toward polar residues: residues His-454 to Asn-465 and Ser-487 to Pro-499. Over residues Asn-500 to Ser-519 the composition is skewed to low complexity.

Belongs to the G-protein coupled receptor 1 family. In terms of tissue distribution, during late embryogenesis (stages 11-15), expressed in the brain and in a specific subset of neurons in each neuromere of the developing ventral ganglion. Expressed in the cortex of the adult brain, which contains the neuronal cell bodies.

Its subcellular location is the cell membrane. Its function is as follows. Receptor for tachykinin-like peptides. The sequence is that of Tachykinin-like peptides receptor 99D (TkR99D) from Drosophila melanogaster (Fruit fly).